Reading from the N-terminus, the 230-residue chain is MPSAKSSDLSPTKTNLESTTKQKVSVQDIFLYIPNLIGYLRIITAIISFLCMANHPVATLIFYGISGFLDAFDGYAARKFNQGTRFGAVLDMVTDRCATSSLIVYLGVLYPQYTVFWQILVSLDLSSHYMHMYAMLSAGSTSHKNVDETQSKLLSLYYNNRLVLFFVCLINELFYMAVYLHYYKFFWLGTVMLVASTPIWLFKQIANIIQLKNASLILARMDAHDHSKRD.

Residues 1-28 (MPSAKSSDLSPTKTNLESTTKQKVSVQD) lie on the Cytoplasmic side of the membrane. A helical transmembrane segment spans residues 29-51 (IFLYIPNLIGYLRIITAIISFLC). Over 52-57 (MANHPV) the chain is Lumenal. A helical transmembrane segment spans residues 58–77 (ATLIFYGISGFLDAFDGYAA). 2 residues coordinate Mg(2+): D70 and D73. Positions 74, 78, and 84 each coordinate a CDP-1,2-diacyl-sn-glycerol. Residues 78-89 (RKFNQGTRFGAV) lie on the Cytoplasmic side of the membrane. Residues 90 to 110 (LDMVTDRCATSSLIVYLGVLY) form a helical membrane-spanning segment. The Mg(2+) site is built by D91 and D95. Catalysis depends on D95, which acts as the Proton acceptor. Over 111-112 (PQ) the chain is Lumenal. Residues 113–133 (YTVFWQILVSLDLSSHYMHMY) traverse the membrane as a helical segment. The Cytoplasmic segment spans residues 134–161 (AMLSAGSTSHKNVDETQSKLLSLYYNNR). The chain crosses the membrane as a helical span at residues 162–182 (LVLFFVCLINELFYMAVYLHY). Residues 183–184 (YK) are Lumenal-facing. Residues 185–205 (FFWLGTVMLVASTPIWLFKQI) form a helical membrane-spanning segment. Residues 206–230 (ANIIQLKNASLILARMDAHDHSKRD) are Cytoplasmic-facing.

The protein belongs to the CDP-alcohol phosphatidyltransferase class-I family. Mn(2+) serves as cofactor. Mg(2+) is required as a cofactor.

It localises to the endoplasmic reticulum membrane. The enzyme catalyses a CDP-1,2-diacyl-sn-glycerol + myo-inositol = a 1,2-diacyl-sn-glycero-3-phospho-(1D-myo-inositol) + CMP + H(+). With respect to regulation, inhibited by calcium and zinc ions. Inhibited by nucleoside triphosphates and diphosphates. Catalyzes the synthesis of phosphatidylinositol (PtdIns). Required for proper membrane dynamics and cell wall integrity. This is CDP-diacylglycerol--inositol 3-phosphatidyltransferase from Candida albicans (strain SC5314 / ATCC MYA-2876) (Yeast).